Reading from the N-terminus, the 103-residue chain is PTS system oligo-beta-mannoside-specific EIIB component (103 aa).

The PTS EIIB type-3 domain maps to 1-103 (MKKILLACSS…EQALSLMVNQ (103 aa)). The active-site Phosphocysteine intermediate is the Cys8. Cys8 is subject to Phosphocysteine; by EIIA.

It is found in the cytoplasm. It catalyses the reaction D-cellobiose(out) + N(pros)-phospho-L-histidyl-[protein] = 6-phospho-beta-D-glucosyl-(1-&gt;4)-D-glucose(in) + L-histidyl-[protein]. The phosphoenolpyruvate-dependent sugar phosphotransferase system (sugar PTS), a major carbohydrate active transport system, catalyzes the phosphorylation of incoming sugar substrates concomitantly with their translocation across the cell membrane. The enzyme II GmuABC PTS system is involved in the transport of oligo-glucomannans such as cellobiose or mannobiose. The protein is PTS system oligo-beta-mannoside-specific EIIB component of Bacillus subtilis (strain 168).